The sequence spans 479 residues: Glutamate--tRNA ligase (479 aa).

A 'HIGH' region motif is present at residues 9-19 (PSPTGNLHIGT). The 'KMSKS' region signature appears at 243-247 (KLSKR). ATP is bound at residue K246.

The protein belongs to the class-I aminoacyl-tRNA synthetase family. Glutamate--tRNA ligase type 1 subfamily. In terms of assembly, monomer.

The protein localises to the cytoplasm. The catalysed reaction is tRNA(Glu) + L-glutamate + ATP = L-glutamyl-tRNA(Glu) + AMP + diphosphate. Its function is as follows. Catalyzes the attachment of glutamate to tRNA(Glu) in a two-step reaction: glutamate is first activated by ATP to form Glu-AMP and then transferred to the acceptor end of tRNA(Glu). This is Glutamate--tRNA ligase from Synechococcus sp. (strain JA-3-3Ab) (Cyanobacteria bacterium Yellowstone A-Prime).